A 308-amino-acid polypeptide reads, in one-letter code: Mitoferrin (308 aa).

Helical transmembrane passes span 13 to 29, 69 to 89, 111 to 131, 168 to 184, 213 to 233, and 285 to 302; these read GGSF…AGFA, ITGL…SHAV, IKVG…ASPM, YTTT…VYFA, LVAG…FDVV, and MVFH…YEYF. 3 Solcar repeats span residues 14–100, 108–192, and 207–305; these read GSFY…LKFK, HHPI…LKKI, and YQLI…FKFI.

Belongs to the mitochondrial carrier (TC 2.A.29) family.

The protein localises to the mitochondrion inner membrane. Its function is as follows. Mitochondrial solute carriers shuttle metabolites, nucleotides, and cofactors through the mitochondrial inner membrane. Mitochondrial iron transporter that mediates iron uptake. Probably required for heme synthesis of hemoproteins and Fe-S cluster assembly. The sequence is that of Mitoferrin (mcfF) from Dictyostelium discoideum (Social amoeba).